A 482-amino-acid chain; its full sequence is BTB/POZ domain-containing protein 6-B (482 aa).

The region spanning 80–150 (ADVHFVVGPP…MYSDEIELEA (71 aa)) is the BTB domain.

As to quaternary structure, interacts with cul3. Interacts (via BTB domain) with zbtb16/plzf. As to expression, in embryos, expressed in the cranial ganglia.

It localises to the cytoplasm. The protein localises to the nucleus. In terms of biological role, adapter protein for the cul3 E3 ubiquitin-protein ligase complex. Promotes the export of zbtb16/plzf from the nucleus to the cytoplasm and targets zbtb16/plzf for ubiquitination and degradation. Up-regulates neurog1 expression and antagonizes zbtb16/plzf, to promote neurogenesis. This Danio rerio (Zebrafish) protein is BTB/POZ domain-containing protein 6-B (btbd6b).